A 295-amino-acid polypeptide reads, in one-letter code: Nucleotide-binding protein Sare_3328 (295 aa).

19–26 (GVSGGGRS) lines the ATP pocket. A GTP-binding site is contributed by 70–73 (DVRS).

Belongs to the RapZ-like family.

In terms of biological role, displays ATPase and GTPase activities. The chain is Nucleotide-binding protein Sare_3328 from Salinispora arenicola (strain CNS-205).